The chain runs to 143 residues: Ribonuclease VapC33 (143 aa).

Mg(2+) contacts are provided by Asp-5 and Asp-108.

The protein belongs to the PINc/VapC protein family. The cofactor is Mg(2+).

Its function is as follows. Toxic component of a type II toxin-antitoxin (TA) system. An RNase. Its toxic effect is neutralized by coexpression with cognate antitoxin VapB33. The protein is Ribonuclease VapC33 of Mycobacterium tuberculosis (strain CDC 1551 / Oshkosh).